Consider the following 884-residue polypeptide: MAQPYMKKDDDDEDVEYSPFYGIEKGAVLQEARAFHDPQLDARKCSQVITKLLYLLNQGETFTKVEATEVFFAVTKLFQSKDAGLRRLVYLMIKELSPSSDEVIIVTSSLMKDMNSKTDMYRANAIRVLCRIIDGTLLTQIERYLKQAIVDKNPVVASAALVSGIHLLQANPEIVKRWSNEVQEAVQSRFALVQFHGLALLHQIRQNDRLAISKMVSGLTRGSVRSPLAQCLLIRYTSQVIRESSMNTQTSDRPFFDYLESCLRHKSEMVILEAARKIAEMDVTSRELAPAITVLQLFLSSSKPVLRFAAVRTLNKVAMTRPLAVTNCNVDLESLMSDQNRSIATLAITTLLKTGNESSVDRLMKQITNFMSDIADEFKIVVVEAIRSLCLKFPLKYRSMMNFLSNSLREEGGFEYKKAIVDSIVTLISEIPDAKEIGLLYLCEFIEDCEFTYLSSQILHLLGNEGPRTSDPSRYIRYIYNRVILENATVRASAVSTLAKFGALVDALKPRIFVLLRRCLFDTDDEVRDRATLYLQTLDGEVAVGSTEKDVKEFLFGSFDVPLANLEASLKTYEPSEEPFDISLVSREVKSQPLQEKKAPGKKPPAGAPAPAPVPAVDAYQKILSSIPEFSGFGRLFKSSEPVELTEAETEYAINVVKHIYSSHVVLQYNCTNTIPEQLLENVTVYVDATDAEEFSEVCSKPLRSLPYDSPGQIFVAFEKPEHVPATGKFSNVLKFIVKEVDTSTGEVDEDGVEDEYQIEDLEIVSADYMLRVAVSNFRNAWENMDPESERVDEYGLGVRESLAEAVSAVISILGMQPCEGTEVVPKNARSHTCLLSGVFIGDAKVLVRLSFGLSGPKEVAMKLAVRSDDPEVSDKIHEIVASG.

HEAT repeat units follow at residues 65-100, 101-138, 286-323, 325-357, and 358-395; these read VEATEVFFAVTKLFQSKDAGLRRLVYLMIKELSPSS, DEVIIVTSSLMKDMNSKTDMYRANAIRVLCRIIDGTLL, RELAPAITVLQLFLSSSKPVLRFAAVRTLNKVAMTRPL, VTNCNVDLESLMSDQNRSIATLAITTLLKTGNE, and SSVDRLMKQITNFMSDIADEFKIVVVEAIRSLCLKFPL. A disordered region spans residues 592 to 612; that stretch reads QPLQEKKAPGKKPPAGAPAPA. Pro residues predominate over residues 602–612; sequence KKPPAGAPAPA.

Belongs to the COPG family. As to quaternary structure, oligomeric complex that consists of at least the alpha, beta, beta', gamma, delta, epsilon and zeta subunits.

It localises to the cytoplasm. The protein localises to the golgi apparatus membrane. It is found in the cytoplasmic vesicle. The protein resides in the COPI-coated vesicle membrane. Its function is as follows. The coatomer is a cytosolic protein complex that binds to dilysine motifs and reversibly associates with Golgi non-clathrin-coated vesicles, which further mediate biosynthetic protein transport from the ER, via the Golgi up to the trans Golgi network. Coatomer complex is required for budding from Golgi membranes, and is essential for the retrograde Golgi-to-ER transport of dilysine-tagged proteins. This Oryza sativa subsp. japonica (Rice) protein is Coatomer subunit gamma-1.